The following is a 41-amino-acid chain: Large ribosomal subunit protein bL36 (41 aa).

This sequence belongs to the bacterial ribosomal protein bL36 family.

This chain is Large ribosomal subunit protein bL36, found in Paracoccus denitrificans (strain Pd 1222).